The chain runs to 547 residues: Chaperonin GroEL (547 aa).

ATP contacts are provided by residues 30–33 (TLGP), lysine 51, 87–91 (DGTTT), glycine 415, 480–482 (NAA), and aspartate 496.

Belongs to the chaperonin (HSP60) family. As to quaternary structure, forms a cylinder of 14 subunits composed of two heptameric rings stacked back-to-back. Interacts with the co-chaperonin GroES.

It localises to the cytoplasm. The catalysed reaction is ATP + H2O + a folded polypeptide = ADP + phosphate + an unfolded polypeptide.. Functionally, together with its co-chaperonin GroES, plays an essential role in assisting protein folding. The GroEL-GroES system forms a nano-cage that allows encapsulation of the non-native substrate proteins and provides a physical environment optimized to promote and accelerate protein folding. The chain is Chaperonin GroEL from Glaesserella parasuis serovar 5 (strain SH0165) (Haemophilus parasuis).